A 60-amino-acid chain; its full sequence is Large ribosomal subunit protein bL32 (60 aa).

The protein belongs to the bacterial ribosomal protein bL32 family.

The sequence is that of Large ribosomal subunit protein bL32 from Thermosipho africanus (strain TCF52B).